The chain runs to 245 residues: Uridylate kinase (245 aa).

16-19 (KLSG) is a binding site for ATP. The interval 24-29 (GDNGFG) is involved in allosteric activation by GTP. Glycine 59 lines the UMP pocket. ATP-binding residues include glycine 60 and arginine 64. UMP contacts are provided by residues aspartate 78 and 139 to 146 (NGAPFFTT). ATP contacts are provided by asparagine 167, tyrosine 173, and aspartate 176.

Belongs to the UMP kinase family. As to quaternary structure, homohexamer.

It is found in the cytoplasm. The catalysed reaction is UMP + ATP = UDP + ADP. Its pathway is pyrimidine metabolism; CTP biosynthesis via de novo pathway; UDP from UMP (UMPK route): step 1/1. Allosterically activated by GTP. Inhibited by UTP. In terms of biological role, catalyzes the reversible phosphorylation of UMP to UDP. The chain is Uridylate kinase from Deinococcus radiodurans (strain ATCC 13939 / DSM 20539 / JCM 16871 / CCUG 27074 / LMG 4051 / NBRC 15346 / NCIMB 9279 / VKM B-1422 / R1).